The sequence spans 954 residues: Glycine dehydrogenase (decarboxylating) (954 aa).

Lysine 704 is modified (N6-(pyridoxal phosphate)lysine).

The protein belongs to the GcvP family. The glycine cleavage system is composed of four proteins: P, T, L and H. It depends on pyridoxal 5'-phosphate as a cofactor.

The catalysed reaction is N(6)-[(R)-lipoyl]-L-lysyl-[glycine-cleavage complex H protein] + glycine + H(+) = N(6)-[(R)-S(8)-aminomethyldihydrolipoyl]-L-lysyl-[glycine-cleavage complex H protein] + CO2. Functionally, the glycine cleavage system catalyzes the degradation of glycine. The P protein binds the alpha-amino group of glycine through its pyridoxal phosphate cofactor; CO(2) is released and the remaining methylamine moiety is then transferred to the lipoamide cofactor of the H protein. This is Glycine dehydrogenase (decarboxylating) from Rhizobium johnstonii (strain DSM 114642 / LMG 32736 / 3841) (Rhizobium leguminosarum bv. viciae).